Here is a 187-residue protein sequence, read N- to C-terminus: 1,6-anhydro-N-acetylmuramyl-L-alanine amidase AmpD (187 aa).

An N-acetylmuramoyl-L-alanine amidase domain is found at 30 to 167 (LLVVHNISLP…APERKTDPGP (138 aa)). Residue H34 participates in Zn(2+) binding. E116 functions as the Proton acceptor in the catalytic mechanism. Residues H154 and D164 each coordinate Zn(2+).

It belongs to the N-acetylmuramoyl-L-alanine amidase 2 family. Zn(2+) serves as cofactor.

The protein resides in the cytoplasm. The enzyme catalyses Hydrolyzes the link between N-acetylmuramoyl residues and L-amino acid residues in certain cell-wall glycopeptides.. Amidase activity is inhibited by metal chelators such as EDTA, dipicolinic acid or 1,10-phenanthroline. Functionally, involved in cell wall peptidoglycan recycling. Specifically cleaves the amide bond between the lactyl group of N-acetylmuramic acid and the alpha-amino group of the L-alanine in degradation products containing an anhydro N-acetylmuramyl moiety. Is also involved in beta-lactamase induction. This Citrobacter freundii protein is 1,6-anhydro-N-acetylmuramyl-L-alanine amidase AmpD.